A 723-amino-acid chain; its full sequence is BBSome complex assembly protein BBS10 (723 aa).

It belongs to the TCP-1 chaperonin family. As to quaternary structure, component of a complex composed at least of MKKS, BBS10, BBS12, TCP1, CCT2, CCT3, CCT4, CCT5 and CCT8.

It localises to the cell projection. Its subcellular location is the cilium. Probable molecular chaperone that assists the folding of proteins upon ATP hydrolysis. Plays a role in the assembly of BBSome, a complex involved in ciliogenesis regulating transports vesicles to the cilia. Involved in adipogenic differentiation. This is BBSome complex assembly protein BBS10 (BBS10) from Homo sapiens (Human).